The following is a 244-amino-acid chain: Orotidine 5'-phosphate decarboxylase (244 aa).

Substrate is bound by residues Asp-12, Lys-34, 61–70 (DLKLFDIPNT), Thr-125, Arg-187, Gln-196, Gly-216, and Arg-217. Lys-63 functions as the Proton donor in the catalytic mechanism.

Belongs to the OMP decarboxylase family. Type 1 subfamily. In terms of assembly, homodimer.

The enzyme catalyses orotidine 5'-phosphate + H(+) = UMP + CO2. It functions in the pathway pyrimidine metabolism; UMP biosynthesis via de novo pathway; UMP from orotate: step 2/2. Functionally, catalyzes the decarboxylation of orotidine 5'-monophosphate (OMP) to uridine 5'-monophosphate (UMP). The sequence is that of Orotidine 5'-phosphate decarboxylase from Dictyoglomus turgidum (strain DSM 6724 / Z-1310).